A 369-amino-acid chain; its full sequence is 3-methylarginine biosynthesis aminotransferase ArgM (369 aa).

The residue at position 216 (Lys-216) is an N6-(pyridoxal phosphate)lysine.

The protein belongs to the class-I pyridoxal-phosphate-dependent aminotransferase family. Pyridoxal 5'-phosphate is required as a cofactor.

It catalyses the reaction L-arginine + 2-oxoglutarate = 5-guanidino-2-oxopentanoate + L-glutamate. It carries out the reaction (3R)-5-guanidino-3-methyl-2-oxopentanoate + L-aspartate = (3R)-3-methyl-L-arginine + oxaloacetate. Its pathway is antibiotic biosynthesis. Aminotransferase involved in the formation of the rare amino acid 3-methylarginine (MeArg), which is incorporated into the peptidyl nucleoside antibiotic arginomycin. Catalyzes two rounds of transamination: the transfer of the amino group from L-arginine to 2-oxoglutarate to give glutamate and 5-guanidino-2-oxopentanoic acid, which will be methylated by ArgN. Then, ArgM specifically catalyzes transamination from the donor L-aspartate to the 5-guanidino-3-methyl-2-oxopentanoic acid produced by ArgN, generating the final product, 3-methylarginine. Cannot use arginine analogs, such as D-arginine, L-homoarginine and N-methylarginine for the first transamination. The protein is 3-methylarginine biosynthesis aminotransferase ArgM of Streptomyces arginensis.